We begin with the raw amino-acid sequence, 459 residues long: Glutamate--tRNA ligase 2 (459 aa).

Residues Pro8–Gly18 carry the 'HIGH' region motif. A 'KMSKS' region motif is present at residues Lys237 to Arg241. Lys240 provides a ligand contact to ATP.

It belongs to the class-I aminoacyl-tRNA synthetase family. Glutamate--tRNA ligase type 1 subfamily. Monomer.

Its subcellular location is the cytoplasm. It carries out the reaction tRNA(Glu) + L-glutamate + ATP = L-glutamyl-tRNA(Glu) + AMP + diphosphate. Its function is as follows. Catalyzes the attachment of glutamate to tRNA(Glu) in a two-step reaction: glutamate is first activated by ATP to form Glu-AMP and then transferred to the acceptor end of tRNA(Glu). The polypeptide is Glutamate--tRNA ligase 2 (Campylobacter concisus (strain 13826)).